The sequence spans 209 residues: Imidazoleglycerol-phosphate dehydratase (209 aa).

The protein belongs to the imidazoleglycerol-phosphate dehydratase family.

The protein localises to the cytoplasm. It catalyses the reaction D-erythro-1-(imidazol-4-yl)glycerol 3-phosphate = 3-(imidazol-4-yl)-2-oxopropyl phosphate + H2O. The protein operates within amino-acid biosynthesis; L-histidine biosynthesis; L-histidine from 5-phospho-alpha-D-ribose 1-diphosphate: step 6/9. The polypeptide is Imidazoleglycerol-phosphate dehydratase (Paracidovorax citrulli (strain AAC00-1) (Acidovorax citrulli)).